The chain runs to 103 residues: Sperm-associated antigen 11B (103 aa).

The signal sequence occupies residues 1–25 (MRQRLLPSVTSLLLVALLFPGSSQA). The N-linked (GlcNAc...) asparagine glycan is linked to asparagine 29.

The protein belongs to the SPAG11 family. As to expression, specifically expressed in caput and proximal corpus of epididymis (at protein level). Present in the epididymal epithelium and on the sperm surface, with a subacrosomal equatorial distribution on the sperm head (at protein level).

It is found in the secreted. Has antimicrobial activity against E.coli. Plays a role in the defense response in the male reproductive tract, contributing to sperm maturation, storage and protection. This Homo sapiens (Human) protein is Sperm-associated antigen 11B.